Here is a 559-residue protein sequence, read N- to C-terminus: 2-isopropylmalate synthase (559 aa).

The 275-residue stretch at 33-307 folds into the Pyruvate carboxyltransferase domain; it reads PIWCSSDLRD…NPDLDFSDID (275 aa). 4 residues coordinate Mg(2+): Asp-42, His-246, His-248, and Asn-282. Residues 439-559 are regulatory domain; that stretch reads ANTPYALVSH…SLSQPEAKAA (121 aa).

It belongs to the alpha-IPM synthase/homocitrate synthase family. LeuA type 2 subfamily. Homodimer. Mg(2+) serves as cofactor.

The protein localises to the cytoplasm. The enzyme catalyses 3-methyl-2-oxobutanoate + acetyl-CoA + H2O = (2S)-2-isopropylmalate + CoA + H(+). It participates in amino-acid biosynthesis; L-leucine biosynthesis; L-leucine from 3-methyl-2-oxobutanoate: step 1/4. In terms of biological role, catalyzes the condensation of the acetyl group of acetyl-CoA with 3-methyl-2-oxobutanoate (2-ketoisovalerate) to form 3-carboxy-3-hydroxy-4-methylpentanoate (2-isopropylmalate). This Pseudomonas fluorescens (strain Pf0-1) protein is 2-isopropylmalate synthase.